A 130-amino-acid chain; its full sequence is Small ribosomal subunit protein uS9 (130 aa).

It belongs to the universal ribosomal protein uS9 family.

This Brevibacillus brevis (strain 47 / JCM 6285 / NBRC 100599) protein is Small ribosomal subunit protein uS9.